A 1225-amino-acid polypeptide reads, in one-letter code: DNA-directed RNA polymerase subunit beta' (1225 aa).

Cys60, Cys62, Cys75, and Cys78 together coordinate Zn(2+). Mg(2+)-binding residues include Asp450, Asp452, and Asp454. 4 residues coordinate Zn(2+): Cys818, Cys892, Cys899, and Cys902.

This sequence belongs to the RNA polymerase beta' chain family. As to quaternary structure, the RNAP catalytic core consists of 2 alpha, 1 beta, 1 beta' and 1 omega subunit. When a sigma factor is associated with the core the holoenzyme is formed, which can initiate transcription. Requires Mg(2+) as cofactor. The cofactor is Zn(2+).

It catalyses the reaction RNA(n) + a ribonucleoside 5'-triphosphate = RNA(n+1) + diphosphate. Functionally, DNA-dependent RNA polymerase catalyzes the transcription of DNA into RNA using the four ribonucleoside triphosphates as substrates. The chain is DNA-directed RNA polymerase subunit beta' from Streptococcus pneumoniae serotype 19F (strain G54).